The sequence spans 71 residues: MRQEIHPKYTEVTVTCSCGNTFVTRSTAGKKEMNIDICSECHPFYTGKQRIVDTAGRVDKFKKRFGGMKKI.

4 residues coordinate Zn(2+): Cys16, Cys18, Cys38, and Cys41.

It belongs to the bacterial ribosomal protein bL31 family. Type A subfamily. Part of the 50S ribosomal subunit. The cofactor is Zn(2+).

Functionally, binds the 23S rRNA. The sequence is that of Large ribosomal subunit protein bL31 from Francisella tularensis subsp. mediasiatica (strain FSC147).